The chain runs to 786 residues: Probable glutamine--tRNA ligase (786 aa).

Positions 181-198 (DLAPKKKEKKPEGPKPSK) are enriched in basic and acidic residues. A disordered region spans residues 181–218 (DLAPKKKEKKPEGPKPSKDAAAAATAPGTKNQKEASPE). The 'HIGH' region signature appears at 276–286 (PEPNGVLHIGH). ATP is bound by residues 277 to 279 (EPN) and 283 to 289 (HIGHAKA). Aspartate 309 and tyrosine 444 together coordinate L-glutamine. Residues threonine 463, 492-493 (RL), and 500-502 (VSK) each bind ATP. Positions 499–503 (VVSKR) match the 'KMSKS' region motif.

The protein belongs to the class-I aminoacyl-tRNA synthetase family.

It catalyses the reaction tRNA(Gln) + L-glutamine + ATP = L-glutaminyl-tRNA(Gln) + AMP + diphosphate. This is Probable glutamine--tRNA ligase from Caenorhabditis elegans.